Reading from the N-terminus, the 331-residue chain is MATLYYDTDADLGLLSGKTVAIIGYGSQGHAHALNLKDSGVDVVVGLYEGSRSADKAKADGLEVLSVADAAAKADWIMVLLPDEFQKEVYDKEIAPHLSAGKVLSFAHGFNIRFGLIKPPADVDVVMIAPKGPGHTVRWEYQNAQGVPALFAIEQDASGNARGLAMAYAKGIGGTRAGILETNFKEETETDLFGEQAVLCGGLSELVKAGFETLVEAGYQPELAYFECLHEVKLIVDLMVKGGLSAMRDSISNTAEYGDYVSGPRLITAETKAEMKRILGDIQDGTFAKNFVAECEAGKPEMNKIRERDSAHKIEEVGKGLRAMFSWLKAA.

Positions Met1 to Thr182 constitute a KARI N-terminal Rossmann domain. Residues Tyr25–Gln28, Ser51, Ser53, and Asp83–Gln86 each bind NADP(+). Residue His108 is part of the active site. Gly134 lines the NADP(+) pocket. In terms of domain architecture, KARI C-terminal knotted spans Asn183–Leu328. 4 residues coordinate Mg(2+): Asp191, Glu195, Glu227, and Glu231. Residue Ser252 participates in substrate binding.

Belongs to the ketol-acid reductoisomerase family. Mg(2+) is required as a cofactor.

It carries out the reaction (2R)-2,3-dihydroxy-3-methylbutanoate + NADP(+) = (2S)-2-acetolactate + NADPH + H(+). The catalysed reaction is (2R,3R)-2,3-dihydroxy-3-methylpentanoate + NADP(+) = (S)-2-ethyl-2-hydroxy-3-oxobutanoate + NADPH + H(+). It participates in amino-acid biosynthesis; L-isoleucine biosynthesis; L-isoleucine from 2-oxobutanoate: step 2/4. The protein operates within amino-acid biosynthesis; L-valine biosynthesis; L-valine from pyruvate: step 2/4. Functionally, involved in the biosynthesis of branched-chain amino acids (BCAA). Catalyzes an alkyl-migration followed by a ketol-acid reduction of (S)-2-acetolactate (S2AL) to yield (R)-2,3-dihydroxy-isovalerate. In the isomerase reaction, S2AL is rearranged via a Mg-dependent methyl migration to produce 3-hydroxy-3-methyl-2-ketobutyrate (HMKB). In the reductase reaction, this 2-ketoacid undergoes a metal-dependent reduction by NADPH to yield (R)-2,3-dihydroxy-isovalerate. This is Ketol-acid reductoisomerase (NADP(+)) from Synechococcus sp. (strain RCC307).